The following is a 433-amino-acid chain: Bifunctional urease accessory protein UreEF (433 aa).

Residues 1–200 (MKIANTFIKR…VMATAASTAS (200 aa)) form a urease accessory protein UreE region. The interval 200–433 (SMTPSLDAGQ…ETQFSRLFRS (234 aa)) is urease accessory protein UreF.

The protein in the N-terminal section; belongs to the UreE family. It in the C-terminal section; belongs to the UreF family. In terms of assembly, ureD, UreF and UreG form a complex that acts as a GTP-hydrolysis-dependent molecular chaperone, activating the urease apoprotein by helping to assemble the nickel containing metallocenter of UreC. The UreE protein probably delivers the nickel.

Its subcellular location is the cytoplasm. Its function is as follows. Involved in urease metallocenter assembly. Binds nickel. Probably functions as a nickel donor during metallocenter assembly. Functionally, required for maturation of urease via the functional incorporation of the urease nickel metallocenter. In Bordetella bronchiseptica (Alcaligenes bronchisepticus), this protein is Bifunctional urease accessory protein UreEF (ureEF).